The following is a 188-amino-acid chain: dCTP deaminase (188 aa).

DCTP-binding positions include 111–116 (KSTYAR), 135–137 (TLE), Q156, Y170, and Q180. E137 functions as the Proton donor/acceptor in the catalytic mechanism.

It belongs to the dCTP deaminase family. Homotrimer.

The catalysed reaction is dCTP + H2O + H(+) = dUTP + NH4(+). Its pathway is pyrimidine metabolism; dUMP biosynthesis; dUMP from dCTP (dUTP route): step 1/2. Catalyzes the deamination of dCTP to dUTP. This Neisseria meningitidis serogroup B (strain ATCC BAA-335 / MC58) protein is dCTP deaminase.